Consider the following 269-residue polypeptide: Formamidopyrimidine-DNA glycosylase (269 aa).

P2 acts as the Schiff-base intermediate with DNA in catalysis. The active-site Proton donor is the E3. K57 serves as the catalytic Proton donor; for beta-elimination activity. The DNA site is built by H90, R109, and K150. The FPG-type zinc-finger motif lies at 235-269 (FVYGRAGEPCRICGEQIESIKLGQRSTFFCRHCQY). Catalysis depends on R259, which acts as the Proton donor; for delta-elimination activity.

This sequence belongs to the FPG family. Monomer. Zn(2+) serves as cofactor.

It carries out the reaction Hydrolysis of DNA containing ring-opened 7-methylguanine residues, releasing 2,6-diamino-4-hydroxy-5-(N-methyl)formamidopyrimidine.. The catalysed reaction is 2'-deoxyribonucleotide-(2'-deoxyribose 5'-phosphate)-2'-deoxyribonucleotide-DNA = a 3'-end 2'-deoxyribonucleotide-(2,3-dehydro-2,3-deoxyribose 5'-phosphate)-DNA + a 5'-end 5'-phospho-2'-deoxyribonucleoside-DNA + H(+). Functionally, involved in base excision repair of DNA damaged by oxidation or by mutagenic agents. Acts as a DNA glycosylase that recognizes and removes damaged bases. Has a preference for oxidized purines, such as 7,8-dihydro-8-oxoguanine (8-oxoG). Has AP (apurinic/apyrimidinic) lyase activity and introduces nicks in the DNA strand. Cleaves the DNA backbone by beta-delta elimination to generate a single-strand break at the site of the removed base with both 3'- and 5'-phosphates. The chain is Formamidopyrimidine-DNA glycosylase from Photorhabdus laumondii subsp. laumondii (strain DSM 15139 / CIP 105565 / TT01) (Photorhabdus luminescens subsp. laumondii).